The sequence spans 415 residues: Casein kinase I isoform delta (415 aa).

The Protein kinase domain occupies 9–277 (YRLGRKIGSG…YLRQLFRNLF (269 aa)). Residues 15–23 (IGSGSFGDI) and lysine 38 each bind ATP. The Proton acceptor role is filled by aspartate 128. Positions 278 to 364 (HRQGFSYDYV…TSPRPVSGME (87 aa)) are centrosomal localization signal (CLS). The segment covering 301-315 (ADDAERERRDREERL) has biased composition (basic and acidic residues). Residues 301 to 415 (ADDAERERRD…SSGLQSVVHR (115 aa)) form a disordered region. Residues 317-342 (HSRNPATRGLPSTASGRLRGTQEVAP) are autoinhibitory. Residues serine 328 and serine 331 each carry the phosphoserine modification. Over residues 347–358 (TPTSHTANTSPR) the composition is skewed to polar residues. Serine 370 carries the phosphoserine modification. The residue at position 375 (arginine 375) is an Omega-N-methylarginine. Over residues 380-400 (NISSSDLTGRQDTSRMSTSQI) the composition is skewed to polar residues. Serine 382, serine 383, serine 384, serine 407, and serine 411 each carry phosphoserine.

It belongs to the protein kinase superfamily. CK1 Ser/Thr protein kinase family. Casein kinase I subfamily. Monomer. Component of the circadian core oscillator, which includes the CRY proteins, CLOCK, or NPAS2, ARTNL/BMAL1 or ARTNL2/BMAL2, CSNK1D and/or CSNK1E, TIMELESS and the PER proteins. Interacts with DNMT1 and MAP1A. Interacts directly with PER1 and PER2 which may lead to their degradation. Interacts with MAPT/TAU, SNAPIN, DBNDD2, AIB1/NCOA3 and ESR1. Interacts with AKAP9/AKAP450; this interaction promotes centrosomal subcellular location. Binds to tubulins in mitotic cells upon DNA damage. Interacts with GJA1. Interacts with DDX3X; this interaction enhances CSNK1D kinase activity in vitro, but it is unclear whether this interaction is physiologically relevant. Interacts with FAM83A, FAM83B, FAM83E and FAM83H (via DUF1669). In terms of processing, autophosphorylated on serine and threonine residues; this autophosphorylation represses activity. Reactivated by phosphatase-mediated dephosphorylation. May be dephosphorylated by PP1.

Its subcellular location is the cytoplasm. The protein localises to the nucleus. It localises to the cytoskeleton. The protein resides in the microtubule organizing center. It is found in the centrosome. Its subcellular location is the perinuclear region. The protein localises to the cell membrane. It localises to the spindle. The protein resides in the golgi apparatus. The catalysed reaction is L-seryl-[protein] + ATP = O-phospho-L-seryl-[protein] + ADP + H(+). It carries out the reaction L-threonyl-[protein] + ATP = O-phospho-L-threonyl-[protein] + ADP + H(+). It catalyses the reaction L-seryl-[tau protein] + ATP = O-phospho-L-seryl-[tau protein] + ADP + H(+). The enzyme catalyses L-threonyl-[tau protein] + ATP = O-phospho-L-threonyl-[tau protein] + ADP + H(+). With respect to regulation, drug-mediated inhibition leads to a delay of the oscillations with the magnitude of this effect dependent upon the timing of drug administration. Inhibited by phosphorylation. Exhibits substrate-dependent heparin activation. Essential serine/threonine-protein kinase that regulates diverse cellular growth and survival processes including Wnt signaling, DNA repair and circadian rhythms. It can phosphorylate a large number of proteins. Casein kinases are operationally defined by their preferential utilization of acidic proteins such as caseins as substrates. Phosphorylates connexin-43/GJA1, MAP1A, SNAPIN, MAPT/TAU, TOP2A, DCK, HIF1A, EIF6, p53/TP53, DVL2, DVL3, ESR1, AIB1/NCOA3, DNMT1, PKD2, YAP1, PER1 and PER2. Central component of the circadian clock. In balance with PP1, determines the circadian period length through the regulation of the speed and rhythmicity of PER1 and PER2 phosphorylation. Controls PER1 and PER2 nuclear transport and degradation. YAP1 phosphorylation promotes its SCF(beta-TRCP) E3 ubiquitin ligase-mediated ubiquitination and subsequent degradation. DNMT1 phosphorylation reduces its DNA-binding activity. Phosphorylation of ESR1 and AIB1/NCOA3 stimulates their activity and coactivation. Phosphorylation of DVL2 and DVL3 regulates WNT3A signaling pathway that controls neurite outgrowth. Phosphorylates NEDD9/HEF1. EIF6 phosphorylation promotes its nuclear export. Triggers down-regulation of dopamine receptors in the forebrain. Activates DCK in vitro by phosphorylation. TOP2A phosphorylation favors DNA cleavable complex formation. May regulate the formation of the mitotic spindle apparatus in extravillous trophoblast. Modulates connexin-43/GJA1 gap junction assembly by phosphorylation. Probably involved in lymphocyte physiology. Regulates fast synaptic transmission mediated by glutamate. This is Casein kinase I isoform delta (CSNK1D) from Bos taurus (Bovine).